A 541-amino-acid polypeptide reads, in one-letter code: Propionate catabolism operon regulatory protein (541 aa).

Residues 221 to 464 (IRGQSPQMEQ…RNMMERLALF (244 aa)) form the Sigma-54 factor interaction domain. 321–330 (AHGGTLFLDE) is an ATP binding site. The segment at residues 513–532 (KTAAARYLGISRTTLWRRLK) is a DNA-binding region (H-T-H motif).

Functionally, involved in the transcriptional regulation of the propionate catabolism operon. This is Propionate catabolism operon regulatory protein (prpR) from Salmonella typhimurium (strain LT2 / SGSC1412 / ATCC 700720).